We begin with the raw amino-acid sequence, 80 residues long: Moroidotoxin A (80 aa).

The first 27 residues, 1–27, serve as a signal peptide directing secretion; sequence MAAVKKHLRFALVAAITIALLVAGSVA. Positions 28–44 are excised as a propeptide; that stretch reads DESSEDIDNIVIKTPLD. Disulfide bonds link cysteine 48–cysteine 65, cysteine 53–cysteine 67, and cysteine 61–cysteine 76.

Belongs to the gympietide family. In terms of tissue distribution, expressed in trichomes, that are stiff epidermal hairs located on the surface of petioles and leaves. Not expressed in other aerial parts.

It localises to the secreted. Functionally, neurotoxin certainly responsible for the defensive, persistent, and painful stings of the giant stinging tree. Inhibits inactivation of Nav1.7/SCN9A sodium channel in sensory neurons by directly interacting with TMEM233, a newly described Nav-interacting protein. Has virtually no effect on Nav1.7/SCN9A function in heterologous expression systems and in neurons that do not express TMEM233. Also weakly but significantly affects Nav1.8/SCN10A. Coexpression of TMEM233 with Nav also confers ExTxA sensitivity to Nav1.1-Nav1.6. On the Nav1.7/SCN9A channel, causes a significant hyperpolarizing shift in the voltage dependence of activation. Its effects on Nav currents are irreversible, with no apparent reduction in activity even after repeated wash steps over 30 minutes. In vivo, induces nocifensive behavior in mice (licking or biting and shaking or lifting of the affected paw) lasting for approximately 1 hour. The polypeptide is Moroidotoxin A (Dendrocnide moroides (Gympie stinging tree)).